Reading from the N-terminus, the 253-residue chain is Sugar fermentation stimulation protein homolog (253 aa).

This sequence belongs to the SfsA family.

The protein is Sugar fermentation stimulation protein homolog of Prochlorococcus marinus (strain NATL1A).